The chain runs to 247 residues: Aliphatic sulfonates import ATP-binding protein SsuB 3 (247 aa).

The region spanning valine 13–leucine 227 is the ABC transporter domain. Residue glycine 45 to serine 52 coordinates ATP.

The protein belongs to the ABC transporter superfamily. Aliphatic sulfonates importer (TC 3.A.1.17.2) family. As to quaternary structure, the complex is composed of two ATP-binding proteins (SsuB), two transmembrane proteins (SsuC) and a solute-binding protein (SsuA).

Its subcellular location is the cell membrane. The catalysed reaction is ATP + H2O + aliphatic sulfonate-[sulfonate-binding protein]Side 1 = ADP + phosphate + aliphatic sulfonateSide 2 + [sulfonate-binding protein]Side 1.. Functionally, part of the ABC transporter complex SsuABC involved in aliphatic sulfonates import. Responsible for energy coupling to the transport system. In Nocardia farcinica (strain IFM 10152), this protein is Aliphatic sulfonates import ATP-binding protein SsuB 3.